A 654-amino-acid chain; its full sequence is MKLSLVAAMLLLLSAARAEEEDKKEDVGTVVGIDLGTTYSCVGVFKNGRVEIIANDQGNRITPSYVAFTPEGERLIGDAAKNQLTSNPENTVFDAKRLIGRTWNDPSVQQDIKFLPFKVVEKKTKPYIQVDIGGGQTKTFAPEEISAMVLTKMKETAEAYLGKKVTHAVVTVPAYFNDAQRQATKDAGTIAGLNVMRIINEPTAAAIAYGLDKREGEKNILVFDLGGGTFDVSLLTIDNGVFEVVATNGDTHLGGEDFDQRVMEHFIKLYKKKTGKDVRKDNRAVQKLRREVEKAKRALSSQHQARIEIESFYEGEDFSETLTRAKFEELNMDLFRSTMKPVQKVLEDSDLKKSDIDEIVLVGGSTRIPKIQQLVKEFFNGKEPSRGINPDEAVAYGAAVQAGVLSGDQDTGDLVLLDVCPLTLGIETVGGVMTKLIPRNTVVPTKKSQIFSTASDNQPTVTIKVYEGERPLTKDNHLLGTFDLTGIPPAPRGVPQIEVTFEIDVNGILRVTAEDKGTGNKNKITITNDQNRLTPEEIERMVNDAEKFAEEDKKLKERIDTRNELESYAYSLKNQIGDKEKLGGKLSSEDKETMEKAVEEKIEWLESHQDADIEDFKAKKKELEEIVQPIISKLYGSAGPPPTGEEDTAEKDEL.

A signal peptide spans 1–18 (MKLSLVAAMLLLLSAARA). A required for interaction with ELAPOR1 region spans residues 1–80 (MKLSLVAAML…EGERLIGDAA (80 aa)). 36 to 39 (GTTY) is a binding site for ATP. S86 carries the phosphoserine modification. K96 serves as a coordination point for ATP. The residue at position 125 (K125) is an N6-acetyllysine. Residues 125-280 (KPYIQVDIGG…KKKTGKDVRK (156 aa)) are nucleotide-binding (NBD). Y160 carries the 3'-nitrotyrosine modification. K213 carries the post-translational modification N6-acetyllysine. ATP is bound at residue 227-229 (GGT). K271 carries the post-translational modification N6-acetyllysine. 293–300 (EKAKRALS) lines the ATP pocket. The residue at position 326 (K326) is an N6-acetyllysine. A Glycyl lysine isopeptide (Lys-Gly) (interchain with G-Cter in SUMO2) cross-link involves residue K352. K353 is modified (N6-acetyllysine; alternate). A Glycyl lysine isopeptide (Lys-Gly) (interchain with G-Cter in SUMO1); alternate cross-link involves residue K353. 364–367 (GSTR) is a binding site for ATP. An interdomain linker region spans residues 409–419 (QDTGDLVLLDV). The segment at 420–500 (CPLTLGIETV…PRGVPQIEVT (81 aa)) is substrate-binding (SBD). K447 carries the post-translational modification N6-succinyllysine. Omega-N-methylarginine is present on R492. The residue at position 518 (T518) is an O-AMP-threonine; alternate. T518 is modified (phosphothreonine; alternate). K585 is subject to N6,N6,N6-trimethyllysine; by METTL21A; in vitro. At K585 the chain carries N6,N6-dimethyllysine; alternate. N6-methyllysine; alternate is present on K585. Residue K591 is modified to N6-methyllysine. The interval 633–654 (KLYGSAGPPPTGEEDTAEKDEL) is disordered. T643 and T648 each carry phosphothreonine. Over residues 644 to 654 (GEEDTAEKDEL) the composition is skewed to acidic residues. The Prevents secretion from ER motif lies at 651–654 (KDEL).

The protein belongs to the heat shock protein 70 family. In terms of assembly, monomer and homooligomer; homooligomerization via the interdomain linker inactivates the chaperone activity and acts as a storage of HSPA5/BiP molecules. Interacts with DNAJC1 (via J domain). Component of an EIF2 complex at least composed of CELF1/CUGBP1, CALR, CALR3, EIF2S1, EIF2S2, HSP90B1 and HSPA5. Part of a large chaperone multiprotein complex comprising DNAJB11, HSP90B1, HSPA5, HYOU, PDIA2, PDIA4, PDIA6, PPIB, SDF2L1, UGGT1 and very small amounts of ERP29, but not, or at very low levels, CALR nor CANX. Interacts with TMEM132A and TRIM21. May form a complex with ERLEC1, OS9, SEL1L and SYVN1. Interacts with DNAJC10. Interacts with DNAJB9/ERdj4; leading to recruit HSPA5/BiP to ERN1/IRE1. Interacts with ERN1/IRE1 (via luminal domain); the interaction takes place following interaction with DNAJB9/ERdj4 and leads to inactivate ERN1/IRE1, the interaction also competitively inhibits ERN1 interaction with MANF. Interacts directly with MANF (via SAP domain); the interaction inhibits ATP binding to HSPA5/BiP and subsequent nucleotide exchange. Interacts with EIF2AK3/PERK (via luminal domain); interaction leads to inactivate EIF2AK3/PERK. Interacts with MX1. Interacts with METTL23. Interacts with CEMIP; the interaction induces calcium leakage from the endoplasmic reticulum and cell migration. Interacts with PCSK4 form; the interaction takes place in the endoplasmic reticulum. Interacts with CIPC. Interacts with CCDC88B (via C-terminus); the interaction opposes ERN1-mediated JNK activation, protecting against apoptosis. Interacts with INPP5K; necessary for INPP5K localization at the endoplasmic reticulum. Interacts with MANF; the interaction is direct. Interacts with LOXL2; leading to activate the ERN1/IRE1-XBP1 pathway of the unfolded protein response. Interacts with CLU under stressed condition; interaction increases CLU protein stability; facilitates its retrotranslocation and redistribution to the mitochondria; cooperatively suppress stress-induced apoptosis by stabilizing mitochondrial membrane integrity. Interacts with CCDC47. Interacts with CLN3. Interacts with ELAPOR1; may regulate the function of HSPA5 in apoptosis and cell proliferation. Interacts with CASP7. Interacts with ILDR2; the interaction stabilizes ILDR2 expression. Interacts with ADAM7. As to quaternary structure, (Microbial infection) Interacts with Japanese encephalitis virus envelope protein E. (Microbial infection) Interacts with R.delemar invasin CotH3 on the surface of nasal epithelial cells. Interacts with R.delemar invasin CotH2. In terms of assembly, (Microbial infection) Interacts with Zika virus envelope protein E and non-structural protein 1 in a chaperone-client manner. In terms of processing, AMPylated by FICD. In unstressed cells, AMPylation at Thr-518 by FICD inactivates the chaperome activity: AMPylated form is locked in a relatively inert state and only weakly stimulated by J domain-containing proteins. In response to endoplasmic reticulum stress, de-AMPylation by the same protein, FICD, restores the chaperone activity.

The protein localises to the endoplasmic reticulum lumen. It localises to the melanosome. It is found in the cytoplasm. Its subcellular location is the cell surface. The enzyme catalyses ATP + H2O = ADP + phosphate + H(+). The chaperone activity is regulated by ATP-induced allosteric coupling of the nucleotide-binding (NBD) and substrate-binding (SBD) domains. In the ADP-bound and nucleotide-free (apo) states, the two domains have little interaction. In contrast, in the ATP-bound state the two domains are tightly coupled, which results in drastically accelerated kinetics in both binding and release of polypeptide substrates. J domain-containing co-chaperones (DNAJB9/ERdj4 or DNAJC10/ERdj5) stimulate the ATPase activity and are required for efficient substrate recognition by HSPA5/BiP. Homooligomerization inactivates participating HSPA5/BiP protomers and probably act as reservoirs to store HSPA5/BiP molecules when they are not needed by the cell. In terms of biological role, endoplasmic reticulum chaperone that plays a key role in protein folding and quality control in the endoplasmic reticulum lumen. Involved in the correct folding of proteins and degradation of misfolded proteins via its interaction with DNAJC10/ERdj5, probably to facilitate the release of DNAJC10/ERdj5 from its substrate. Acts as a key repressor of the EIF2AK3/PERK and ERN1/IRE1-mediated unfolded protein response (UPR). In the unstressed endoplasmic reticulum, recruited by DNAJB9/ERdj4 to the luminal region of ERN1/IRE1, leading to disrupt the dimerization of ERN1/IRE1, thereby inactivating ERN1/IRE1. Also binds and inactivates EIF2AK3/PERK in unstressed cells. Accumulation of misfolded protein in the endoplasmic reticulum causes release of HSPA5/BiP from ERN1/IRE1 and EIF2AK3/PERK, allowing their homodimerization and subsequent activation. Plays an auxiliary role in post-translational transport of small presecretory proteins across endoplasmic reticulum (ER). May function as an allosteric modulator for SEC61 channel-forming translocon complex, likely cooperating with SEC62 to enable the productive insertion of these precursors into SEC61 channel. Appears to specifically regulate translocation of precursors having inhibitory residues in their mature region that weaken channel gating. May also play a role in apoptosis and cell proliferation. (Microbial infection) Plays an important role in viral binding to the host cell membrane and entry for several flaviruses such as Dengue virus, Zika virus and Japanese encephalitis virus. Acts as a component of the cellular receptor for Dengue virus serotype 2/DENV-2 on human liver cells. Functionally, (Microbial infection) Acts as a receptor for CotH proteins expressed by fungi of the order mucorales, the causative agent of mucormycosis, which plays an important role in epithelial cell invasion by the fungi. Acts as a receptor for R.delemar CotH3 in nasal epithelial cells, which may be an early step in rhinoorbital/cerebral mucormycosis (RCM) disease progression. The chain is Endoplasmic reticulum chaperone BiP from Homo sapiens (Human).